A 570-amino-acid polypeptide reads, in one-letter code: Periplasmic trehalase (570 aa).

The N-terminal stretch at 1-34 (MIPPEIRRSVLLQKAIKLALAGTLLTFASFSATA) is a signal peptide. Substrate-binding positions include arginine 159, 166–167 (WD), asparagine 203, 212–214 (RSQ), 284–286 (RPE), and glycine 317. Active-site proton donor/acceptor residues include aspartate 319 and glutamate 503. Glutamate 518 lines the substrate pocket. The segment at 544–570 (KPCDSVPSTRPASLSATPTKTPSAATQ) is disordered. Low complexity predominate over residues 554 to 570 (PASLSATPTKTPSAATQ).

The protein belongs to the glycosyl hydrolase 37 family. Monomer.

The protein localises to the periplasm. The enzyme catalyses alpha,alpha-trehalose + H2O = alpha-D-glucose + beta-D-glucose. Provides the cells with the ability to utilize trehalose at high osmolarity by splitting it into glucose molecules that can subsequently be taken up by the phosphotransferase-mediated uptake system. The protein is Periplasmic trehalase of Salmonella dublin (strain CT_02021853).